The sequence spans 103 residues: DNA-directed RNA polymerase subunit omega (103 aa).

Residues 52 to 103 form a disordered region; it reads EIESGNVTIHPDPEGKREAVRRRIEEEKRRKEEEEKKIKEQIAKEKEDGEKI. Residues 62–103 show a composition bias toward basic and acidic residues; sequence PDPEGKREAVRRRIEEEKRRKEEEEKKIKEQIAKEKEDGEKI.

The protein belongs to the RNA polymerase subunit omega family. The RNAP catalytic core consists of 2 alpha, 1 beta, 1 beta' and 1 omega subunit. When a sigma factor is associated with the core the holoenzyme is formed, which can initiate transcription.

The catalysed reaction is RNA(n) + a ribonucleoside 5'-triphosphate = RNA(n+1) + diphosphate. Its function is as follows. Promotes RNA polymerase assembly. Latches the N- and C-terminal regions of the beta' subunit thereby facilitating its interaction with the beta and alpha subunits. In Streptococcus pneumoniae serotype 19F (strain G54), this protein is DNA-directed RNA polymerase subunit omega.